Reading from the N-terminus, the 460-residue chain is UDP-glucuronate 4-epimerase 6 (460 aa).

2 consecutive transmembrane segments (helical) span residues 41 to 61 (ATLL…PPLS) and 111 to 131 (GLSV…SLAL). 113–144 (SVLVTGAAGFVGSHCSLALRKRGDGVLGFDNF) provides a ligand contact to NAD(+). Residue Tyr263 is the Proton acceptor of the active site.

This sequence belongs to the NAD(P)-dependent epimerase/dehydratase family. As to quaternary structure, homodimer. In terms of tissue distribution, in roots, leaf veins, siliques, flowers, pollen and stems.

It localises to the golgi apparatus. Its subcellular location is the golgi stack membrane. The catalysed reaction is UDP-alpha-D-glucuronate = UDP-alpha-D-galacturonate. Involved in the synthesis of the negatively charged monosaccharide that forms the backbone of pectic cell wall components. The protein is UDP-glucuronate 4-epimerase 6 (GAE6) of Arabidopsis thaliana (Mouse-ear cress).